The sequence spans 237 residues: Phosphoribosylaminoimidazole-succinocarboxamide synthase (237 aa).

It belongs to the SAICAR synthetase family.

It carries out the reaction 5-amino-1-(5-phospho-D-ribosyl)imidazole-4-carboxylate + L-aspartate + ATP = (2S)-2-[5-amino-1-(5-phospho-beta-D-ribosyl)imidazole-4-carboxamido]succinate + ADP + phosphate + 2 H(+). It functions in the pathway purine metabolism; IMP biosynthesis via de novo pathway; 5-amino-1-(5-phospho-D-ribosyl)imidazole-4-carboxamide from 5-amino-1-(5-phospho-D-ribosyl)imidazole-4-carboxylate: step 1/2. The chain is Phosphoribosylaminoimidazole-succinocarboxamide synthase from Erwinia tasmaniensis (strain DSM 17950 / CFBP 7177 / CIP 109463 / NCPPB 4357 / Et1/99).